Here is a 2055-residue protein sequence, read N- to C-terminus: Citron Rho-interacting kinase (2055 aa).

Position 1 is an N-acetylmethionine (Met-1). Residues 97–359 (FEVRSLVGCG…FEGLCCHPFF (263 aa)) enclose the Protein kinase domain. ATP contacts are provided by residues 103–111 (VGCGHFAEV) and Lys-126. Asp-221 functions as the Proton acceptor in the catalytic mechanism. Positions 360 to 430 (ARTDWNNIRN…SKALGYLGRS (71 aa)) constitute an AGC-kinase C-terminal domain. Phosphoserine is present on residues Ser-432, Ser-439, Ser-479, and Ser-581. 3 coiled-coil regions span residues 441–1086 (AKVS…QWEA), 1091–1247 (LGDE…VLYS), and 1275–1325 (AKKK…RKAT). The tract at residues 1132–1328 (LAVKEHKAEI…AAHRKATDHP (197 aa)) is interaction with Rho/Rac. Position 1237 is a phosphotyrosine (Tyr-1237). Residues 1316–1329 (REEAAHRKATDHPH) show a composition bias toward basic and acidic residues. Disordered regions lie at residues 1316–1336 (REEA…PATA) and 1348–1377 (SPEH…EFSR). Over residues 1353 to 1363 (PSAMSLLAPPS) the composition is skewed to low complexity. Residues 1365-1377 (RRKESSTPEEFSR) are compositionally biased toward basic and acidic residues. A Phorbol-ester/DAG-type zinc finger spans residues 1388 to 1437 (PHRFNVGLNMRATKCAVCLDTVHFGRQASKCLECQVMCHPKCSTCLPATC). In terms of domain architecture, PH spans 1469–1589 (SLHLEGWMKV…WVTALESVVA (121 aa)). One can recognise a CNH domain in the interval 1617 to 1907 (RLDMNCTLPF…RYLGPAISSG (291 aa)). Residue Lys-1747 is modified to N6-acetyllysine. Residues 1932–2040 (SGTEQHRVPS…RGRLPAGAVR (109 aa)) are disordered. Residues 1939 to 1948 (VPSTSRSSPN) are compositionally biased toward polar residues. Ser-1966 carries the post-translational modification Phosphoserine. A compositionally biased stretch (basic and acidic residues) spans 1974–2031 (SHPREPSTPHRYRDREGRTELRRDKSPGRPLEREKSPGRMLSTRRERSPGRLFEDSSR). The SH3-binding motif lies at 1979–1984 (PSTPHR). Ser-2021 carries the post-translational modification Phosphoserine. Thr-2041 bears the Phosphothreonine mark.

It belongs to the protein kinase superfamily. AGC Ser/Thr protein kinase family. In terms of assembly, interacts with TTC3. Homodimer. Directly interacts with KIF14 depending on the activation state (stronger interaction with the kinase-dead form). As to expression, a major signal was observed in testis and brain, but it was also detected in thymus, spleen, kidney, heart and lung.

It is found in the cytoplasm. It catalyses the reaction L-seryl-[protein] + ATP = O-phospho-L-seryl-[protein] + ADP + H(+). The enzyme catalyses L-threonyl-[protein] + ATP = O-phospho-L-threonyl-[protein] + ADP + H(+). Plays a role in cytokinesis. Required for KIF14 localization to the central spindle and midbody. Probable RHO/RAC effector that binds to the GTP-bound forms of RHO and RAC1. It probably binds p21 with a tighter specificity in vivo. Displays serine/threonine protein kinase activity. Plays an important role in the regulation of cytokinesis and the development of the central nervous system. Phosphorylates MYL9/MLC2. This is Citron Rho-interacting kinase (Cit) from Mus musculus (Mouse).